We begin with the raw amino-acid sequence, 376 residues long: Histidinol-phosphate aminotransferase (376 aa).

The interval 1 to 21 (MQPRDLSAHEPYVPGRGTKEV) is disordered. Lysine 222 bears the N6-(pyridoxal phosphate)lysine mark.

Belongs to the class-II pyridoxal-phosphate-dependent aminotransferase family. Histidinol-phosphate aminotransferase subfamily. Pyridoxal 5'-phosphate serves as cofactor.

The catalysed reaction is L-histidinol phosphate + 2-oxoglutarate = 3-(imidazol-4-yl)-2-oxopropyl phosphate + L-glutamate. It functions in the pathway amino-acid biosynthesis; L-histidine biosynthesis; L-histidine from 5-phospho-alpha-D-ribose 1-diphosphate: step 7/9. This Haloquadratum walsbyi (strain DSM 16790 / HBSQ001) protein is Histidinol-phosphate aminotransferase.